A 129-amino-acid polypeptide reads, in one-letter code: Small ribosomal subunit protein uS12 (129 aa).

Asp-89 carries the post-translational modification 3-methylthioaspartic acid. A disordered region spans residues 101–129 (SLDTSGVADRKQSRSKYGAKQPKAGAAKK). A compositionally biased stretch (low complexity) spans 116–129 (KYGAKQPKAGAAKK).

This sequence belongs to the universal ribosomal protein uS12 family. In terms of assembly, part of the 30S ribosomal subunit. Contacts proteins S8 and S17. May interact with IF1 in the 30S initiation complex.

Its function is as follows. With S4 and S5 plays an important role in translational accuracy. In terms of biological role, interacts with and stabilizes bases of the 16S rRNA that are involved in tRNA selection in the A site and with the mRNA backbone. Located at the interface of the 30S and 50S subunits, it traverses the body of the 30S subunit contacting proteins on the other side and probably holding the rRNA structure together. The combined cluster of proteins S8, S12 and S17 appears to hold together the shoulder and platform of the 30S subunit. The polypeptide is Small ribosomal subunit protein uS12 (Chlorobaculum parvum (strain DSM 263 / NCIMB 8327) (Chlorobium vibrioforme subsp. thiosulfatophilum)).